The sequence spans 122 residues: Small ribosomal subunit protein uS13 (122 aa).

The segment at 95-122 is disordered; it reads GLPVHGQRTHTNARTRKGPRRGAVGKKK.

It belongs to the universal ribosomal protein uS13 family. In terms of assembly, part of the 30S ribosomal subunit. Forms a loose heterodimer with protein S19. Forms two bridges to the 50S subunit in the 70S ribosome.

In terms of biological role, located at the top of the head of the 30S subunit, it contacts several helices of the 16S rRNA. In the 70S ribosome it contacts the 23S rRNA (bridge B1a) and protein L5 of the 50S subunit (bridge B1b), connecting the 2 subunits; these bridges are implicated in subunit movement. Contacts the tRNAs in the A and P-sites. This Nitratidesulfovibrio vulgaris (strain DSM 19637 / Miyazaki F) (Desulfovibrio vulgaris) protein is Small ribosomal subunit protein uS13.